A 158-amino-acid chain; its full sequence is NAD(P)H-quinone oxidoreductase subunit J, chloroplastic (158 aa).

It belongs to the complex I 30 kDa subunit family. As to quaternary structure, NDH is composed of at least 16 different subunits, 5 of which are encoded in the nucleus.

Its subcellular location is the plastid. It is found in the chloroplast thylakoid membrane. It carries out the reaction a plastoquinone + NADH + (n+1) H(+)(in) = a plastoquinol + NAD(+) + n H(+)(out). It catalyses the reaction a plastoquinone + NADPH + (n+1) H(+)(in) = a plastoquinol + NADP(+) + n H(+)(out). NDH shuttles electrons from NAD(P)H:plastoquinone, via FMN and iron-sulfur (Fe-S) centers, to quinones in the photosynthetic chain and possibly in a chloroplast respiratory chain. The immediate electron acceptor for the enzyme in this species is believed to be plastoquinone. Couples the redox reaction to proton translocation, and thus conserves the redox energy in a proton gradient. The protein is NAD(P)H-quinone oxidoreductase subunit J, chloroplastic of Trachelium caeruleum (Blue throatwort).